A 327-amino-acid polypeptide reads, in one-letter code: Tagatose 1,6-diphosphate aldolase 2 (327 aa).

This sequence belongs to the aldolase LacD family.

The catalysed reaction is D-tagatofuranose 1,6-bisphosphate = D-glyceraldehyde 3-phosphate + dihydroxyacetone phosphate. It participates in carbohydrate metabolism; D-tagatose 6-phosphate degradation; D-glyceraldehyde 3-phosphate and glycerone phosphate from D-tagatose 6-phosphate: step 2/2. The sequence is that of Tagatose 1,6-diphosphate aldolase 2 (lacD2) from Streptococcus pyogenes serotype M3 (strain ATCC BAA-595 / MGAS315).